Reading from the N-terminus, the 440-residue chain is ATP-dependent RNA helicase sub2 (440 aa).

The segment covering 1–16 has biased composition (acidic residues); that stretch reads MSHEEDLIDYSDEELQ. The tract at residues 1-42 is disordered; sequence MSHEEDLIDYSDEELQTTDAAATTAAPASNGEAKKGDLTVSG. Residues 17–28 show a composition bias toward low complexity; the sequence is TTDAAATTAAPA. Residues 57-85 carry the Q motif motif; that stretch reads TGFRDFLLKEELLRAITDCGFEHPSEVQQ. One can recognise a Helicase ATP-binding domain in the interval 88-263; sequence IPTAILNVDV…KKFMRNPLEV (176 aa). ATP is bound at residue 101 to 108; that stretch reads AKSGLGKT. The short motif at 210 to 213 is the DEAD box element; that stretch reads DECD. The Helicase C-terminal domain maps to 291–436; that stretch reads KLNELLDSLE…EYPEGGVDSS (146 aa).

The protein belongs to the DEAD box helicase family. DECD subfamily.

The protein localises to the nucleus. It carries out the reaction ATP + H2O = ADP + phosphate + H(+). ATP-binding RNA helicase involved in transcription elongation and required for the export of mRNA out of the nucleus. SUB2 also plays a role in pre-mRNA splicing and spliceosome assembly. May be involved in rDNA and telomeric silencing, and maintenance of genome integrity. The polypeptide is ATP-dependent RNA helicase sub2 (sub2) (Aspergillus niger (strain ATCC MYA-4892 / CBS 513.88 / FGSC A1513)).